Reading from the N-terminus, the 355-residue chain is Protein RecA (355 aa).

67-74 (GPESSGKT) contributes to the ATP binding site. Residues 331 to 355 (NQDDKPDFTPAAHEVDEGSEAKENF) are disordered.

It belongs to the RecA family.

It is found in the cytoplasm. In terms of biological role, can catalyze the hydrolysis of ATP in the presence of single-stranded DNA, the ATP-dependent uptake of single-stranded DNA by duplex DNA, and the ATP-dependent hybridization of homologous single-stranded DNAs. It interacts with LexA causing its activation and leading to its autocatalytic cleavage. The chain is Protein RecA from Erwinia tasmaniensis (strain DSM 17950 / CFBP 7177 / CIP 109463 / NCPPB 4357 / Et1/99).